The chain runs to 372 residues: DNA replication and repair protein RecF (372 aa).

30 to 37 contacts ATP; sequence GENAQGKT.

The protein belongs to the RecF family.

The protein resides in the cytoplasm. The RecF protein is involved in DNA metabolism; it is required for DNA replication and normal SOS inducibility. RecF binds preferentially to single-stranded, linear DNA. It also seems to bind ATP. The chain is DNA replication and repair protein RecF from Exiguobacterium sp. (strain ATCC BAA-1283 / AT1b).